The sequence spans 218 residues: Glutathione S-transferase class-mu 26 kDa isozyme (218 aa).

The 83-residue stretch at 1–83 (MAPKFGYWKV…YIADKHNMLG (83 aa)) folds into the GST N-terminal domain. Residues 7 to 8 (YW), 41 to 45 (WSNDK), 54 to 55 (NL), and 67 to 68 (QS) contribute to the glutathione site. The GST C-terminal domain maps to 85–203 (CPKERAEISM…NSSRYIKWPL (119 aa)). Substrate is bound at residue Tyr111.

This sequence belongs to the GST superfamily. Mu family. Homodimer. In terms of tissue distribution, tegument and in subtegumentary parenchymal cells. GST 26 may be actively excreted by adult worms.

The enzyme catalyses RX + glutathione = an S-substituted glutathione + a halide anion + H(+). Functionally, conjugation of reduced glutathione to a wide number of exogenous and endogenous hydrophobic electrophiles. Its function is as follows. GST isoenzymes appear to play a central role in the parasite detoxification system. Other functions are also suspected including a role in increasing the solubility of haematin in the parasite gut. The polypeptide is Glutathione S-transferase class-mu 26 kDa isozyme (Schistosoma mansoni (Blood fluke)).